A 151-amino-acid chain; its full sequence is MGRMHSNGKGISGSSLPYNRKPHAWTKPTASEVCETVCKLAKRGYTPSKIGSSLRDSLGVAQVKNVTGSKILRILKVNGLAPTIPEDLYHLIKKAVTINKHLQRARKDYDGKFHLRLVESRIHRLTRPYRKNGTLAPNWKYESNNASTLVA.

The disordered stretch occupies residues 1 to 20; sequence MGRMHSNGKGISGSSLPYNR.

This sequence belongs to the universal ribosomal protein uS15 family. Component of the small ribosomal subunit. Part of the small subunit (SSU) processome, composed of more than 70 proteins and the RNA chaperone small nucleolar RNA (snoRNA) U3.

The protein resides in the cytoplasm. The protein localises to the nucleus. Its subcellular location is the nucleolus. Component of the small ribosomal subunit. The ribosome is a large ribonucleoprotein complex responsible for the synthesis of proteins in the cell. Part of the small subunit (SSU) processome, first precursor of the small eukaryotic ribosomal subunit. During the assembly of the SSU processome in the nucleolus, many ribosome biogenesis factors, an RNA chaperone and ribosomal proteins associate with the nascent pre-rRNA and work in concert to generate RNA folding, modifications, rearrangements and cleavage as well as targeted degradation of pre-ribosomal RNA by the RNA exosome. In Dictyostelium discoideum (Social amoeba), this protein is Small ribosomal subunit protein uS15 (rps13).